Reading from the N-terminus, the 506-residue chain is Alpha-L-fucosidase 1 (506 aa).

The N-terminal stretch at 1–23 (MNSQITLFFFFFSILSLSQISNS) is a signal peptide. N-linked (GlcNAc...) asparagine glycosylation is found at asparagine 22, asparagine 82, asparagine 248, asparagine 320, asparagine 355, and asparagine 487.

It belongs to the glycosyl hydrolase 29 family.

It is found in the secreted. Its subcellular location is the extracellular space. The protein resides in the apoplast. It carries out the reaction an alpha-L-fucoside + H2O = L-fucose + an alcohol. Functionally, hydrolyzes both 3- and 4-linked fucoses in Lewis determinants. Not active on neither 2-linked fucose nor on fucose in alpha-1,3-linkage to the innermost GlcNAc. This chain is Alpha-L-fucosidase 1 (FUC1), found in Arabidopsis thaliana (Mouse-ear cress).